The chain runs to 204 residues: phospholipase A2 inhibitor and Ly6/PLAUR domain-containing protein (204 aa).

The signal sequence occupies residues 1–26 (MRLSRRPETFLLAFVLLCTLLGLGCP). The UPAR/Ly6 domain occupies 27–117 (LHCEICTAAG…NSAFLSVPLT (91 aa)). Cystine bridges form between C29-C53, C32-C39, C46-C74, C80-C101, C102-C107, C126-C151, and C144-C172.

It belongs to the CNF-like-inhibitor family.

It localises to the secreted. This chain is phospholipase A2 inhibitor and Ly6/PLAUR domain-containing protein (PINLYP), found in Homo sapiens (Human).